The following is an 877-amino-acid chain: Dystroglycan 1 (877 aa).

An N-terminal signal peptide occupies residues 1 to 29 (MRMSAGLSLLIPLWGRTFLLLLSVAVTQS). The segment at 30-408 (RWPSEPSDAV…GHIRPTMTIP (379 aa)) is required for laminin recognition. An O-glycosylated at one site region spans residues 49–71 (SMHSVLSDLHEAVPTVVGIPDGT). N141 carries N-linked (GlcNAc...) asparagine glycosylation. C182 and C264 form a disulfide bridge. The mucin-like domain stretch occupies residues 316-468 (ATPTPVTAIG…PPTRIRTTTS (153 aa)). O-linked (Man6P...) threonine glycosylation is found at T317, T319, and T379. 2 disordered regions span residues 380 to 444 (PTLG…PVPR) and 458 to 480 (SPPT…QRPE). Low complexity predominate over residues 413–433 (PTAVATPPTPTTKNPRVSXPT). The segment at 446-468 (TTKAPITRLETASPPTRIRTTTS) is O-glycosylated at seven sites with GalNAc. The Peptidase S72 domain maps to 585 to 694 (RAPARFTAKF…MSIAVTGSGS (110 aa)). N-linked (GlcNAc...) asparagine glycosylation is found at N623, N631, and N643. The cysteines at positions 651 and 695 are disulfide-linked. Residues 706–717 (PKRVPSEAPPTE) are compositionally biased toward pro residues. Positions 706–727 (PKRVPSEAPPTEVPDRDPEKSS) are disordered. Residues 718–727 (VPDRDPEKSS) show a composition bias toward basic and acidic residues. A helical membrane pass occupies residues 732-757 (YLHTVIPAVVVAAILLIAGIIAMICY). Positions 758-764 (RKKRKGK) match the Nuclear localization signal motif. Phosphothreonine is present on T772. The required for interaction with CAV3 stretch occupies residues 801-877 (LQEEKAPLPP…YRSPPPYVPP (77 aa)). Residues 805 to 877 (KAPLPPPEYP…YRSPPPYVPP (73 aa)) are disordered. Residues 814–828 (PNQSVPETTPLNQDT) are compositionally biased toward polar residues. The span at 841–852 (NAPPYQPPPPFT) shows a compositional bias: pro residues. The required for binding DMD and UTRN stretch occupies residues 862–877 (PKNMTPYRSPPPYVPP). The short motif at 871 to 874 (PPPY) is the PPXY motif element. At Y874 the chain carries Phosphotyrosine; by SRC.

Monomer. Heterodimer of alpha- and beta-dystroglycan subunits which are the central components of the dystrophin-glycoprotein complex. This complex then can form a dystrophin-associated glycoprotein complex (DGC) which is composed of three subcomplexes: a cytoplasmic complex comprised of DMD (or UTRN), DTNA and a number of syntrophins, such as SNTB1, SNTB2, SNTG1 and SNTG2, the transmembrane dystroglycan complex, and the sarcoglycan-sarcospan complex. Interacts (via the N-terminal of alphaDAG1) with LARGE1; the interaction enhances laminin binding. Interacts with SGCD. Interacts with AGR2 and AGR3. Interacts (betaDAG1) with DMD; the interaction is inhibited by phosphorylation on the PPXY motif. Interacts (betaDAG1, via its PPXY motif) with UTRN (via its WWW and ZZ domains); the interaction is inhibited by phosphorylation on the PPXY motif. Interacts (betaDAG1, via its phosphorylated PPXY motif) with the SH2 domain-containing proteins, FYN, CSK, NCK and SHC. Interacts (betaDAG1) with CAV3 (via a central WW-like domain); the interaction disrupts the binding of DMD. BetaDAG1 directly interacts with ANK3, but not with ANK2; this interaction does not interfere with DMD-binding and is required for retention at costameres. Identified in a dystroglycan complex that contains at least PRX, DRP2, UTRN, DMD and DAG1. Interacts with POMGNT1. BetaDAG1 interacts with CD93. Post-translationally, O-glycosylated. POMGNT1 catalyzes the initial addition of N-acetylglucosamine, giving rise to the GlcNAc(beta1-2)Man(alpha1-)O-Ser/Thr moiety and thus providing the necessary basis for the addition of further carbohydrate moieties. Heavily O-glycosylated comprising of up to two thirds of its mass and the carbohydrate composition differs depending on tissue type. Mucin-type O-glycosylation is important for ligand binding activity. O-mannosylation of alpha-DAG1 is found in high abundance in both brain and muscle where the most abundant glycan is Sia-alpha-2-3-Gal-beta-1-4-Glc-NAc-beta-1-2-Man. In muscle, glycosylation on Thr-317, Thr-319 and Thr-379 by a phosphorylated O-mannosyl glycan with the structure 2-(N-acetylamido)-2-deoxygalactosyl-beta-1,3-2-(N-acetylamido)-2-deoxyglucosyl-beta-1,4-6-phosphomannose is mediated by like-acetylglucosaminyltransferase (LARGE1) protein amd is required for laminin binding. O-glycosylated in the N-terminal region with a core 1 or possibly core 8 glycan. The brain form displays a unique glycosylation pattern which is absent in other tissues; this form shows enhanced binding to laminin LAMA5 compared to the skeletal muscle form. In terms of processing, N-glycosylated. Autolytic cleavage produces the alpha and beta subunits. In cutaneous cells, as well as in certain pathological conditions, shedding of beta-dystroglycan can occur releasing a peptide of about 30 kDa. Post-translationally, SRC-mediated phosphorylation of the PPXY motif of the beta subunit recruits SH2 domain-containing proteins, but inhibits binding to WWW domain-containing proteins, DMD and UTRN. This phosphorylation also inhibits nuclear entry.

It is found in the secreted. The protein resides in the extracellular space. Its subcellular location is the cell membrane. The protein localises to the cytoplasm. It localises to the cytoskeleton. It is found in the nucleus. The protein resides in the nucleoplasm. Its subcellular location is the sarcolemma. The protein localises to the postsynaptic cell membrane. Functionally, the dystroglycan complex is involved in a number of processes including laminin and basement membrane assembly, sarcolemmal stability, cell survival, peripheral nerve myelination, nodal structure, cell migration, and epithelial polarization. Extracellular peripheral glycoprotein that acts as a receptor for extracellular matrix proteins containing laminin-G domains. Receptor for laminin-2 (LAMA2) and agrin in peripheral nerve Schwann cells. Also acts as a receptor for laminin LAMA5. In terms of biological role, transmembrane protein that plays important roles in connecting the extracellular matrix to the cytoskeleton. Acts as a cell adhesion receptor in both muscle and non-muscle tissues. Receptor for both DMD and UTRN and, through these interactions, scaffolds axin to the cytoskeleton. Also functions in cell adhesion-mediated signaling and implicated in cell polarity. This Sus scrofa (Pig) protein is Dystroglycan 1.